The chain runs to 364 residues: Histidinol-phosphate aminotransferase (364 aa).

Lysine 226 bears the N6-(pyridoxal phosphate)lysine mark.

Belongs to the class-II pyridoxal-phosphate-dependent aminotransferase family. Histidinol-phosphate aminotransferase subfamily. In terms of assembly, homodimer. Requires pyridoxal 5'-phosphate as cofactor.

The enzyme catalyses L-histidinol phosphate + 2-oxoglutarate = 3-(imidazol-4-yl)-2-oxopropyl phosphate + L-glutamate. Its pathway is amino-acid biosynthesis; L-histidine biosynthesis; L-histidine from 5-phospho-alpha-D-ribose 1-diphosphate: step 7/9. This is Histidinol-phosphate aminotransferase from Campylobacter jejuni subsp. doylei (strain ATCC BAA-1458 / RM4099 / 269.97).